The sequence spans 490 residues: MCGSSMASEKQVKFVIVGGGIAGVTCAEQIASQFPSDEVCLLTASPLVKKVTNFRQVSKTLEEFDIEEQPSRVLEEKYPNLKVLQSAVRLLKAREHLLETEDGQRFFYRKLCLCSGGRPKLLSKDNPHVLGIRDTDSAQEFQKRLSTAKRIVVIGNGGIALELVYEVEGCEVIWAVKDKAIGNTFFDAGAAQFLIPSLEADRREASSVCKRARYTTDSSAAGHSGSSSELGSALGPDWHEGIELRGAKQSVRGVHIEYECEVEQIYTQQELLQSEHGTKTAELGVWPAYVQLTNGKIYGCDFIVSATGVVPNTDPFLPGNNFDVAADLGLLVDDHMRTSEADVFAAGDVCSAGWEPSSIWQQMRLWTQARQMGWYAARCMAADVLDEPIELDFCFELFSHITKFFNYKVVLLGKFNAQGLGQDHELLVRCTKGQEYVKVVLSGGRMVGAVLIGETDLEETFENLILNQMDLTRYGEELLNPNIDIEDYFD.

This sequence belongs to the class-I pyridine nucleotide-disulfide oxidoreductase family. PYROXD1 subfamily. FAD is required as a cofactor.

Its subcellular location is the nucleus. The protein resides in the cytoplasm. It is found in the myofibril. It localises to the sarcomere. Its function is as follows. Probable FAD-dependent oxidoreductase; involved in the cellular oxidative stress response. Required for normal sarcomere structure and muscle fiber integrity. The chain is Pyridine nucleotide-disulfide oxidoreductase domain-containing protein 1 (pyroxd1) from Danio rerio (Zebrafish).